A 188-amino-acid polypeptide reads, in one-letter code: Probable nicotinate-nucleotide adenylyltransferase (188 aa).

Belongs to the NadD family.

It carries out the reaction nicotinate beta-D-ribonucleotide + ATP + H(+) = deamido-NAD(+) + diphosphate. Its pathway is cofactor biosynthesis; NAD(+) biosynthesis; deamido-NAD(+) from nicotinate D-ribonucleotide: step 1/1. In terms of biological role, catalyzes the reversible adenylation of nicotinate mononucleotide (NaMN) to nicotinic acid adenine dinucleotide (NaAD). The polypeptide is Probable nicotinate-nucleotide adenylyltransferase (Listeria welshimeri serovar 6b (strain ATCC 35897 / DSM 20650 / CCUG 15529 / CIP 8149 / NCTC 11857 / SLCC 5334 / V8)).